The primary structure comprises 852 residues: DNA repair protein rhp54 (852 aa).

2 short sequence motifs (nuclear localization signal) span residues 35 to 51 (KKFKCPSLVISEKRKEL) and 178 to 181 (KRKK). Basic and acidic residues predominate over residues 187–205 (NRKGKKEISDSEPESDHDS). Positions 187–208 (NRKGKKEISDSEPESDHDSCVS) are disordered. The region spanning 281–459 (GRIDRCANGC…FSLLNFANPG (179 aa)) is the Helicase ATP-binding domain. 294–301 (DEMGLGKT) provides a ligand contact to ATP. Positions 410 to 413 (DEGH) match the DEGH box motif. A Helicase C-terminal domain is found at 614–767 (VLERMLYQIK…CVVDEAQDVE (154 aa)).

The protein belongs to the SNF2/RAD54 helicase family. In terms of assembly, homohexamer. Interacts with rhp51.

It localises to the nucleus. It catalyses the reaction ATP + H2O = ADP + phosphate + H(+). Its function is as follows. Plays an essential role in homologous recombination (HR) which is a major pathway for repairing DNA double-strand breaks (DSBs), single-stranded DNA (ssDNA) gaps, and stalled or collapsed replication forks. Acts as a molecular motor during the homology search and guides RAD51 ssDNA along a donor dsDNA thereby changing the homology search from the diffusion-based mechanism to a motor-guided mechanism. Plays also an essential role in RAD51-mediated synaptic complex formation which consists of three strands encased in a protein filament formed once homology is recognized. Once DNA strand exchange occured, dissociates RAD51 from nucleoprotein filaments formed on dsDNA. This chain is DNA repair protein rhp54 (rhp54), found in Schizosaccharomyces pombe (strain 972 / ATCC 24843) (Fission yeast).